Consider the following 245-residue polypeptide: tRNA pseudouridine synthase A (245 aa).

The active-site Nucleophile is the Asp-52. Tyr-111 contacts substrate.

The protein belongs to the tRNA pseudouridine synthase TruA family. Homodimer.

It catalyses the reaction uridine(38/39/40) in tRNA = pseudouridine(38/39/40) in tRNA. Functionally, formation of pseudouridine at positions 38, 39 and 40 in the anticodon stem and loop of transfer RNAs. This is tRNA pseudouridine synthase A from Thermotoga sp. (strain RQ2).